The chain runs to 134 residues: Profilin-4 (134 aa).

Cys-13 and Cys-118 are oxidised to a cystine. The short motif at 84–100 (AVIRGKKGSGGITIKKT) is the Involved in PIP2 interaction element. The residue at position 114 (Thr-114) is a Phosphothreonine.

It belongs to the profilin family. Occurs in many kinds of cells as a complex with monomeric actin in a 1:1 ratio. Phosphorylated by MAP kinases.

The protein localises to the cytoplasm. Its subcellular location is the cytoskeleton. Functionally, binds to actin and affects the structure of the cytoskeleton. At high concentrations, profilin prevents the polymerization of actin, whereas it enhances it at low concentrations. This chain is Profilin-4, found in Olea europaea (Common olive).